The primary structure comprises 156 residues: Transcriptional regulator MraZ (156 aa).

SpoVT-AbrB domains follow at residues 7 to 64 and 93 to 136; these read KERH…EPSV and LEMV…EPAR.

The protein belongs to the MraZ family. Forms oligomers.

The protein resides in the cytoplasm. The protein localises to the nucleoid. This Chlorobium phaeovibrioides (strain DSM 265 / 1930) (Prosthecochloris vibrioformis (strain DSM 265)) protein is Transcriptional regulator MraZ.